Reading from the N-terminus, the 321-residue chain is Olfactory receptor 51G1 (321 aa).

Topologically, residues 1–27 (MTILLNSSLQRATFFLTGFQGLEGLHG) are extracellular. Asn6 carries N-linked (GlcNAc...) asparagine glycosylation. A helical membrane pass occupies residues 28–48 (WISIPFCFIYLTVILGNLTIL). At 49–56 (HVICTDAT) the chain is on the cytoplasmic side. Residues 57–77 (LHGPMYYFLGMLAVTDLGLCL) form a helical membrane-spanning segment. Over 78 to 101 (STLPTVLGIFWFDTREIGIPACFT) the chain is Extracellular. Cysteines 99 and 191 form a disulfide. The helical transmembrane segment at 102–122 (QLFFIHTLSSMESSVLLSMSI) threads the bilayer. Residues 123–141 (DRYVAVCNPLHDSTVLTPA) are Cytoplasmic-facing. The helical transmembrane segment at 142 to 162 (CIVKMGLSSVLRSALLILPLP) threads the bilayer. Residues 163-198 (FLLKRFQYCHSHVLAHAYCLHLEIMKLACSSIIVNH) lie on the Extracellular side of the membrane. Residues 199–219 (IYGLFVVACTVGVDSLLIFLS) traverse the membrane as a helical segment. Topologically, residues 220-239 (YALILRTVLSIASHQERLRA) are cytoplasmic. The helical transmembrane segment at 240–260 (LNTCVSHICAVLLFYIPMIGL) threads the bilayer. Residues 261-275 (SLVHRFGEHLPRVVH) are Extracellular-facing. A helical transmembrane segment spans residues 276–296 (LFMSYVYLLVPPLMNPIIYSI). The Cytoplasmic portion of the chain corresponds to 297–321 (KTKQIRQRIIKKFQFIKSLRCFWKD).

This sequence belongs to the G-protein coupled receptor 1 family.

Its subcellular location is the cell membrane. Odorant receptor. The protein is Olfactory receptor 51G1 (OR51G1) of Homo sapiens (Human).